The chain runs to 738 residues: Flagellar radial spoke protein 2 (738 aa).

R104 carries the asymmetric dimethylarginine modification. 2 stretches are compositionally biased toward acidic residues: residues 134 to 153 and 161 to 182; these read PDWV…EDEA and EGEE…DGEG. The tract at residues 134–189 is disordered; sequence PDWVAPEDDEAAAVETEDEAAGGAALAEGEEPPPEPEPEPEAAPEDGEGDAPAPKI. An Asymmetric dimethylarginine modification is found at R260. Positions 357–426 are disordered; sequence AAAEAAAAAP…PPKPKKKKKV (70 aa). Residues 371-415 are compositionally biased toward acidic residues; the sequence is EGEEGEGEAPPAEEEPPAEEEAEEEEEEAEEGAEEGAEEGEEGEE. Asymmetric dimethylarginine occurs at positions 453, 538, and 615. A disordered region spans residues 674–738; it reads AEAGEGEAVA…SSEESKAAAE (65 aa). Low complexity predominate over residues 689-730; sequence PAEAEAAPAEGEAAPPAEGEGEAQPAQEGSNSSSSSSDSSSS.

The protein belongs to the dpy-30 family. Asymmetrically dimethylated at Arg-104, Arg-260, Arg-453, Arg-538 and Arg-615 during flagellum resorption. Probably methylated by PRMT1.

It localises to the cytoplasm. Its subcellular location is the cytoskeleton. The protein resides in the flagellum axoneme. Its function is as follows. Flagellar radial spokes contribute to the regulation of dynein arm activity and thus the pattern of flagellar bending. They consist of a thin stalk, which is attached to the a subfiber of the outer doublet microtubule, and a bulbous head, which is attached to the stalk and appears to interact with the projections from the central pair of microtubules. Binds calmodulin in a calcium-dependent manner. The polypeptide is Flagellar radial spoke protein 2 (Chlamydomonas reinhardtii (Chlamydomonas smithii)).